The following is a 392-amino-acid chain: Formate-dependent phosphoribosylglycinamide formyltransferase (392 aa).

Residues 20 to 21 (EL) and Glu-80 each bind N(1)-(5-phospho-beta-D-ribosyl)glycinamide. Residues Arg-112, Lys-153, 158–163 (SSGKGQ), 193–196 (EGFI), and Glu-201 each bind ATP. The 190-residue stretch at 117-306 (RLAAETLALP…EFALHVRAIL (190 aa)) folds into the ATP-grasp domain. 2 residues coordinate Mg(2+): Glu-265 and Glu-277. N(1)-(5-phospho-beta-D-ribosyl)glycinamide is bound by residues Asp-284, Lys-354, and 361–362 (RR).

It belongs to the PurK/PurT family. As to quaternary structure, homodimer.

The enzyme catalyses N(1)-(5-phospho-beta-D-ribosyl)glycinamide + formate + ATP = N(2)-formyl-N(1)-(5-phospho-beta-D-ribosyl)glycinamide + ADP + phosphate + H(+). Its pathway is purine metabolism; IMP biosynthesis via de novo pathway; N(2)-formyl-N(1)-(5-phospho-D-ribosyl)glycinamide from N(1)-(5-phospho-D-ribosyl)glycinamide (formate route): step 1/1. In terms of biological role, involved in the de novo purine biosynthesis. Catalyzes the transfer of formate to 5-phospho-ribosyl-glycinamide (GAR), producing 5-phospho-ribosyl-N-formylglycinamide (FGAR). Formate is provided by PurU via hydrolysis of 10-formyl-tetrahydrofolate. In Shewanella amazonensis (strain ATCC BAA-1098 / SB2B), this protein is Formate-dependent phosphoribosylglycinamide formyltransferase.